A 433-amino-acid chain; its full sequence is L-lysine 2,3-aminomutase (433 aa).

The region spanning histidine 122–alanine 334 is the Radical SAM core domain. Residues cysteine 136, cysteine 140, and cysteine 143 each contribute to the [4Fe-4S] cluster site. Cysteine 279 serves as a coordination point for Zn(2+). Lysine 348 is modified (N6-(pyridoxal phosphate)lysine). Positions 389, 392, and 396 each coordinate Zn(2+).

The protein belongs to the radical SAM superfamily. KamA family. Requires [4Fe-4S] cluster as cofactor. It depends on pyridoxal 5'-phosphate as a cofactor. Zn(2+) is required as a cofactor.

The catalysed reaction is L-lysine = (3S)-3,6-diaminohexanoate. Its function is as follows. Catalyzes the interconversion of L-alpha-lysine and L-beta-lysine. Is involved in the biosynthesis pathway of N6-acetyl-beta-lysine, a compatible solute produced by methanogenic archaea that helps cells to cope with salt stress. The protein is L-lysine 2,3-aminomutase (ablA) of Methanococcus maripaludis (strain DSM 14266 / JCM 13030 / NBRC 101832 / S2 / LL).